We begin with the raw amino-acid sequence, 41 residues long: Large ribosomal subunit protein bL36 (41 aa).

It belongs to the bacterial ribosomal protein bL36 family.

The sequence is that of Large ribosomal subunit protein bL36 from Azorhizobium caulinodans (strain ATCC 43989 / DSM 5975 / JCM 20966 / LMG 6465 / NBRC 14845 / NCIMB 13405 / ORS 571).